Reading from the N-terminus, the 494-residue chain is Protein DETOXIFICATION 21 (494 aa).

Alanine 2 is modified (N-acetylalanine). 12 helical membrane-spanning segments follow: residues 40–60 (LWIV…VSII), 73–95 (LAAY…LGMA), 123–143 (IVLT…GPIL), 158–178 (IIAL…TCQM), 188–208 (IIAY…WLLM), 217–237 (GAMT…LLFV), 268–288 (GGML…TGNL), 297–317 (ALAI…GFLA), 340–360 (LTAV…FLFL), 384–404 (LLAF…VAVG), 416–436 (LACY…VVGL), and 441–461 (VWIG…VMTL).

It belongs to the multi antimicrobial extrusion (MATE) (TC 2.A.66.1) family.

It is found in the membrane. The sequence is that of Protein DETOXIFICATION 21 from Arabidopsis thaliana (Mouse-ear cress).